A 378-amino-acid chain; its full sequence is Sphingosine 1-phosphate receptor 3 (378 aa).

Residues 1 to 44 (MATTHAQGHQPVLGNDTLREHYDYVGKLAGRLRDPPEGGTLITT) are Extracellular-facing. Asn-15 carries N-linked (GlcNAc...) asparagine glycosylation. Residues 45-65 (ILFLVTCSFIVLENLMVLIAI) traverse the membrane as a helical segment. The Cytoplasmic portion of the chain corresponds to 66-74 (WKNNKFHNR). Residues 75–95 (MYFFIGNLALCDLLAGIAYKV) form a helical membrane-spanning segment. Residues 96 to 115 (NILMSGRKTFSLSPTVWFLR) are Extracellular-facing. Residues 116-136 (EGSMFVALGASTCSLLAIAIE) form a helical membrane-spanning segment. Residues 137 to 154 (RHLTMIKMRPYDANKKHR) are Cytoplasmic-facing. The helical transmembrane segment at 155-175 (VFLLIGMCWLIAFSLGALPIL) threads the bilayer. Topologically, residues 176 to 196 (GWNCLENFPDCSTILPLYSKK) are extracellular. A helical transmembrane segment spans residues 197 to 217 (YIAFLISIFTAILVTIVILYA). Over 218–244 (RIYCLVKSSSRRVANHNSERSMALLRT) the chain is Cytoplasmic. The chain crosses the membrane as a helical span at residues 245–265 (VVIVVSVFIACWSPLFILFLI). Residues 266-281 (DVACRAKECSILFKSQ) are Extracellular-facing. Residues 282-302 (WFIMLAVLNSAMNPVIYTLAS) traverse the membrane as a helical segment. At 303-378 (KEMRRAFFRL…RSFQNGVLCK (76 aa)) the chain is on the cytoplasmic side. A disordered region spans residues 323–354 (TQASPMQPALDPSRSKSSSSNNSSHSPKVKED). Position 326 is a phosphoserine (Ser-326). Residues 337 to 348 (SKSSSSNNSSHS) are compositionally biased toward low complexity.

It belongs to the G-protein coupled receptor 1 family. As to expression, most abundant in heart, lung, kidney and spleen; low but detectable in brain, thymus, muscle and testis; and nearly undetectable in liver, stomach, and intestine. Expressed in embryonic lung from embryonic day 14-18. Also abundantly detected in embryonic nasal cartilage, sphenoid bone, vena cava, Meckel's cartilage/incisor teeth, genital tubercle and bladder.

The protein localises to the cell membrane. Functionally, receptor for the lysosphingolipid sphingosine 1-phosphate (S1P). S1P is a bioactive lysophospholipid that elicits diverse physiological effect on most types of cells and tissues. The polypeptide is Sphingosine 1-phosphate receptor 3 (S1pr3) (Mus musculus (Mouse)).